The following is a 517-amino-acid chain: Nuclear transcription factor Y subunit alpha (517 aa).

Polar residues predominate over residues 1–11; the sequence is MNQINYLTSER. 4 disordered regions span residues 1 to 95, 121 to 183, 252 to 281, and 304 to 517; these read MNQI…MDIH, RIDY…NFNY, ESENKLPKTRKAYQHESRHQHAIRRQRGCG, and AAAN…NNRS. 2 stretches are compositionally biased toward low complexity: residues 26–81 and 126–183; these read NNSS…SSSS and NNNN…NFNY. The Subunit association domain (SAD) motif lies at 232–255; it reads YVNAKQYNRILKRRAARAKLESEN. Positions 262-287 form a DNA-binding region, NFYA/HAP2-type; that stretch reads KAYQHESRHQHAIRRQRGCGGRFLTK. The segment covering 304–345 has biased composition (low complexity); it reads AAANPNASSTSTTTSNITNNNNNNNNNNNTNNNNNNNNTNVN. A compositionally biased stretch (acidic residues) spans 359–371; sequence SDDDIENDVENDS. Low complexity-rich tracts occupy residues 377 to 388 and 408 to 423; these read KNNSNSPNQSSS and NNNINNNNNNNNNNNN. The segment covering 438–447 has biased composition (polar residues); the sequence is PLLNNGHIQA. Positions 448–517 are enriched in low complexity; sequence QQNQSPSSSP…PLSNFSNNRS (70 aa).

It belongs to the NFYA/HAP2 subunit family. Heterotrimeric transcription factor composed of three components, nfyA, nfyB and nfyC. nfyB and nfyC must interact and dimerize for nfyA association and DNA binding.

The protein localises to the nucleus. Component of the NF-Y/HAP transcription factor complex. The NF-Y complex stimulates the transcription of various genes by recognizing and binding to a CCAAT motif in promoters. The chain is Nuclear transcription factor Y subunit alpha (nfyA) from Dictyostelium discoideum (Social amoeba).